Consider the following 347-residue polypeptide: Merozoite surface protein P12 (347 aa).

The segment at residues methionine 1–cysteine 23 is a signal peptide (or 25). 2 6-Cys domains span residues lysine 27 to leucine 172 and lysine 175 to serine 305. A glycan (N-linked (GlcNAc...) asparagine) is linked at asparagine 28. Disulfide bonds link cysteine 31–cysteine 53, cysteine 67–cysteine 138, and cysteine 81–cysteine 136. 6 N-linked (GlcNAc...) asparagine glycosylation sites follow: asparagine 147, asparagine 200, asparagine 228, asparagine 242, asparagine 265, and asparagine 322. 3 disulfide bridges follow: cysteine 179–cysteine 211, cysteine 225–cysteine 286, and cysteine 236–cysteine 284. Asparagine 322 carries GPI-anchor amidated asparagine lipidation. Residues serine 323 to leucine 347 constitute a propeptide, removed in mature form.

In terms of assembly, heterodimer; heterodimerizes with PF41. May form an antiparallel heterodimer with PF41.

It is found in the cell surface. The protein resides in the cell membrane. The sequence is that of Merozoite surface protein P12 (PF12) from Plasmodium falciparum.